The sequence spans 232 residues: GDT1-like protein 5 (232 aa).

A run of 6 helical transmembrane segments spans residues 13-33 (LAMT…AILA), 40-60 (LVLA…VSLG), 72-92 (THHV…WEGF), 135-155 (PFVL…TFFG), 175-195 (FGVV…AVMG), and 207-227 (MVGL…YLSG).

This sequence belongs to the GDT1 family.

Its subcellular location is the membrane. The protein is GDT1-like protein 5 of Oryza sativa subsp. japonica (Rice).